A 299-amino-acid chain; its full sequence is Fructose-1,6-bisphosphatase class 1 (299 aa).

Glutamate 79, aspartate 98, leucine 100, and aspartate 101 together coordinate Mg(2+). Residues aspartate 101–serine 104, tyrosine 207, and lysine 238 each bind substrate. Mg(2+) is bound at residue glutamate 244.

Belongs to the FBPase class 1 family. Homotetramer. Mg(2+) serves as cofactor.

It is found in the cytoplasm. It carries out the reaction beta-D-fructose 1,6-bisphosphate + H2O = beta-D-fructose 6-phosphate + phosphate. It functions in the pathway carbohydrate biosynthesis; gluconeogenesis. This Campylobacter curvus (strain 525.92) protein is Fructose-1,6-bisphosphatase class 1.